The chain runs to 430 residues: UDP-N-acetylmuramoylalanine--D-glutamate ligase (430 aa).

Residue 109-115 (GTDGKST) participates in ATP binding.

The protein belongs to the MurCDEF family.

Its subcellular location is the cytoplasm. It catalyses the reaction UDP-N-acetyl-alpha-D-muramoyl-L-alanine + D-glutamate + ATP = UDP-N-acetyl-alpha-D-muramoyl-L-alanyl-D-glutamate + ADP + phosphate + H(+). It participates in cell wall biogenesis; peptidoglycan biosynthesis. Functionally, cell wall formation. Catalyzes the addition of glutamate to the nucleotide precursor UDP-N-acetylmuramoyl-L-alanine (UMA). This chain is UDP-N-acetylmuramoylalanine--D-glutamate ligase, found in Thermotoga maritima (strain ATCC 43589 / DSM 3109 / JCM 10099 / NBRC 100826 / MSB8).